The chain runs to 250 residues: Proteasome subunit alpha type-2 (250 aa).

Lys108 is covalently cross-linked (Glycyl lysine isopeptide (Lys-Gly) (interchain with G-Cter in ubiquitin)).

It belongs to the peptidase T1A family. The 26S proteasome consists of a 20S proteasome core and two 19S regulatory subunits. The 20S proteasome core is composed of 28 subunits that are arranged in four stacked rings, resulting in a barrel-shaped structure. The two end rings are each formed by seven alpha subunits, and the two central rings are each formed by seven beta subunits. The catalytic chamber with the active sites is on the inside of the barrel.

Its subcellular location is the cytoplasm. It localises to the nucleus. The proteasome degrades poly-ubiquitinated proteins in the cytoplasm and in the nucleus. It is essential for the regulated turnover of proteins and for the removal of misfolded proteins. The proteasome is a multicatalytic proteinase complex that is characterized by its ability to cleave peptides with Arg, Phe, Tyr, Leu, and Glu adjacent to the leaving group at neutral or slightly basic pH. It has an ATP-dependent proteolytic activity. The protein is Proteasome subunit alpha type-2 (PRE8) of Saccharomyces cerevisiae (strain ATCC 204508 / S288c) (Baker's yeast).